The following is a 718-amino-acid chain: Catalase-peroxidase (718 aa).

Positions 98–219 (WHAAGTYRMG…LAATEMGLIY (122 aa)) form a cross-link, tryptophyl-tyrosyl-methioninium (Trp-Tyr) (with M-245). H99 functions as the Proton acceptor in the catalytic mechanism. Residues 219–245 (YVNPEGPQASGDPRSAAPFIRATFGNM) constitute a cross-link (tryptophyl-tyrosyl-methioninium (Tyr-Met) (with W-98)). Residue H260 coordinates heme b.

This sequence belongs to the peroxidase family. Peroxidase/catalase subfamily. In terms of assembly, homodimer or homotetramer. Heme b serves as cofactor. In terms of processing, formation of the three residue Trp-Tyr-Met cross-link is important for the catalase, but not the peroxidase activity of the enzyme.

The enzyme catalyses H2O2 + AH2 = A + 2 H2O. It catalyses the reaction 2 H2O2 = O2 + 2 H2O. Functionally, bifunctional enzyme with both catalase and broad-spectrum peroxidase activity. The chain is Catalase-peroxidase from Acinetobacter baumannii (strain AB307-0294).